We begin with the raw amino-acid sequence, 251 residues long: Isopentenyl-diphosphate delta-isomerase (251 aa).

Residue Lys-49 coordinates substrate. Mg(2+) contacts are provided by His-53 and His-66. In terms of domain architecture, Nudix hydrolase spans 64–212 (LLHRAFSVFL…SNSFTPWFKL (149 aa)). Positions 86 and 90 each coordinate substrate. Cys-102 is an active-site residue. Ser-103 serves as a coordination point for substrate. 2 residues coordinate Mg(2+): Glu-162 and Glu-164. Glu-164 is an active-site residue.

This sequence belongs to the IPP isomerase type 1 family. Mg(2+) serves as cofactor.

It is found in the cytoplasm. It catalyses the reaction isopentenyl diphosphate = dimethylallyl diphosphate. Its pathway is isoprenoid biosynthesis; dimethylallyl diphosphate biosynthesis; dimethylallyl diphosphate from isopentenyl diphosphate: step 1/1. Its function is as follows. Isopentenyl-diphosphate delta-isomerase; part of the second module of ergosterol biosynthesis pathway that includes the middle steps of the pathway. The second module is carried out in the vacuole and involves the formation of farnesyl diphosphate, which is also an important intermediate in the biosynthesis of ubiquinone, dolichol, heme and prenylated proteins. Activity by the mevalonate kinase first converts mevalonate into 5-phosphomevalonate. 5-phosphomevalonate is then further converted to 5-diphosphomevalonate by the phosphomevalonate kinase. The diphosphomevalonate decarboxylase then produces isopentenyl diphosphate. The isopentenyl-diphosphate delta-isomerase then catalyzes the 1,3-allylic rearrangement of the homoallylic substrate isopentenyl (IPP) to its highly electrophilic allylic isomer, dimethylallyl diphosphate (DMAPP). Finally the farnesyl diphosphate synthase catalyzes the sequential condensation of isopentenyl pyrophosphate with dimethylallyl pyrophosphate, and then with the resultant geranylpyrophosphate to the ultimate product farnesyl pyrophosphate. This chain is Isopentenyl-diphosphate delta-isomerase, found in Phaffia rhodozyma (Yeast).